Here is a 2037-residue protein sequence, read N- to C-terminus: Protein SWOLLEN 1 (2037 aa).

Disordered regions lie at residues 141-179 (VEPG…VKTD), 454-487 (REGG…NDRD), 504-531 (SVGY…TDKS), 567-637 (KTSS…KDAV), 686-705 (SLPI…DNTA), 837-893 (VGSP…SGGK), 1011-1045 (ATPE…PMIP), 1148-1197 (KHVQ…ESGP), 1729-1748 (SGET…KRPR), 1793-1812 (KSTR…TGLQ), and 1841-2037 (EAST…QSKK). The segment covering 147-157 (SHERSLSKEET) has biased composition (basic and acidic residues). Over residues 158–176 (VNLQPNPSVDDTPGESSVV) the composition is skewed to polar residues. Positions 454–466 (REGGVSKKSDNEG) are enriched in basic and acidic residues. The segment covering 504–514 (SVGYVSGGSTS) has biased composition (low complexity). Residues 515–526 (ELAESESQSDSI) show a composition bias toward polar residues. Residues 841-852 (STSSLDKTAAKS) are compositionally biased toward low complexity. The segment covering 853–865 (SKAKSERKPRRTS) has biased composition (basic residues). 2 stretches are compositionally biased toward polar residues: residues 1025 to 1041 (ETPS…SGTN) and 1151 to 1171 (QSGT…TSTV). Basic residues predominate over residues 1179–1189 (TRVKSRKRKKM). The span at 1794–1805 (STREENKPDPLR) shows a compositional bias: basic and acidic residues. Composition is skewed to polar residues over residues 1874–1886 (KTIS…TISR), 1942–1964 (EEQT…STNK), and 2013–2023 (LQTSMMTSKIP). A compositionally biased stretch (basic residues) spans 2028–2037 (SKSHLSQSKK).

Interacts with importin alpha IMPA1 and IMPA2, required for nuclear-localized proteins import. As to expression, mainly expressed in seedlings, flower buds and stems, and, to a lower extent, in leaves and siliques.

The protein localises to the nucleus. Functionally, under salt stress, appears to prevent the accumulation of reactive oxygen species (ROS) in roots and required for the maintenance of cell wall integrity (cellulose, pectin and lignin composition) by interacting with importin alpha (e.g. IMPA1 and IMPA2) and binding to the promoter of several ROS- and cell wall-related genes to regulate their expression. Necessary for cells organization in meristems and root elongation zones as well as for root elongation in high salinity, but not upon osmotic stress. This Arabidopsis thaliana (Mouse-ear cress) protein is Protein SWOLLEN 1.